The sequence spans 106 residues: Large ribosomal subunit protein uL24 (106 aa).

Belongs to the universal ribosomal protein uL24 family. As to quaternary structure, part of the 50S ribosomal subunit.

Functionally, one of two assembly initiator proteins, it binds directly to the 5'-end of the 23S rRNA, where it nucleates assembly of the 50S subunit. In terms of biological role, one of the proteins that surrounds the polypeptide exit tunnel on the outside of the subunit. The chain is Large ribosomal subunit protein uL24 from Thermosipho africanus (strain TCF52B).